Consider the following 2121-residue polypeptide: Non-reducing polyketide synthase aoiG (2121 aa).

In terms of domain architecture, Starter acyltransferase (SAT) spans 5–258 (YIFGDQTVRV…LPVSIYAPYH (254 aa)). In terms of domain architecture, Ketosynthase family 3 (KS3) spans 386 to 817 (SSKIAIIGFS…GGNTAVLVED (432 aa)). Active-site for beta-ketoacyl synthase activity residues include Cys-558, His-693, and His-735. The Malonyl-CoA:ACP transacylase (MAT) domain occupies 921–1239 (FLFTGQGAQQ…LSVLHLAGVR (319 aa)). The N-terminal hotdog fold stretch occupies residues 1302–1433 (QKILEEEMTA…CTIELQRPHQ (132 aa)). A PKS/mFAS DH domain is found at 1302 to 1608 (QKILEEEMTA…FQKVARRVLE (307 aa)). His-1334 (proton acceptor; for dehydratase activity) is an active-site residue. The tract at residues 1461–1608 (THKMRRGVAY…FQKVARRVLE (148 aa)) is C-terminal hotdog fold. The active-site Proton donor; for dehydratase activity is Asp-1519. The Carrier 1 domain occupies 1646-1723 (PHVEDAWQQV…SLRIYLNMSS (78 aa)). Ser-1683 bears the O-(pantetheine 4'-phosphoryl)serine mark. Positions 1728–1752 (DSIETSSYPTPDESTTTTITSPSGS) are enriched in low complexity. The tract at residues 1728 to 1760 (DSIETSSYPTPDESTTTTITSPSGSDRNVGRNS) is disordered. Residues 1763–1840 (DGVGTTVGLV…AITAALHAIF (78 aa)) enclose the Carrier 2 domain. Residue Ser-1800 is modified to O-(pantetheine 4'-phosphoryl)serine. The tract at residues 1872-1976 (TLFLFPDGSG…ILIDSPNPMG (105 aa)) is TE/CLC (thioesterase/Claisen cyclase) domain.

Requires pantetheine 4'-phosphate as cofactor.

Its function is as follows. Non-reducing polyketide synthase; part of the gene cluster that mediates the biosynthesis of a methylated derivative of known natural products orthosporin and diaporthin. AoiG catalyzes the biosynthesis of the hexaketide isocoumarin scaffold, via condensation of one acetyl-CoA starter unit with 6 malonyl-CoA units. An oxidoreductase that has still to be identified catalyzes the stereospecific reduction of the carbonyl moiety of the hexaketide isocoumarin scaffold to generate the S-configured secondary alcohol at C-11 of orthosporin. The methyltrasferase aoiF then catalyzes the biotransformation of not only orthosporin to diaporthin but also diaporthin to the final product, by performing a tandem methylation of the polyketide core. The polypeptide is Non-reducing polyketide synthase aoiG (Aspergillus oryzae (strain ATCC 42149 / RIB 40) (Yellow koji mold)).